A 344-amino-acid polypeptide reads, in one-letter code: Protein RecA (344 aa).

65 to 72 provides a ligand contact to ATP; that stretch reads GPESSGKT.

This sequence belongs to the RecA family.

It localises to the cytoplasm. In terms of biological role, can catalyze the hydrolysis of ATP in the presence of single-stranded DNA, the ATP-dependent uptake of single-stranded DNA by duplex DNA, and the ATP-dependent hybridization of homologous single-stranded DNAs. It interacts with LexA causing its activation and leading to its autocatalytic cleavage. This chain is Protein RecA, found in Campylobacter lari.